The chain runs to 545 residues: DNA mismatch repair protein MutL (545 aa).

Residues 517–545 (RRSGARGGGEARPRPQEESFPEAPLPREP) are disordered.

Belongs to the DNA mismatch repair MutL/HexB family.

Functionally, this protein is involved in the repair of mismatches in DNA. It is required for dam-dependent methyl-directed DNA mismatch repair. May act as a 'molecular matchmaker', a protein that promotes the formation of a stable complex between two or more DNA-binding proteins in an ATP-dependent manner without itself being part of a final effector complex. In Thermus thermophilus (strain ATCC 27634 / DSM 579 / HB8), this protein is DNA mismatch repair protein MutL.